Reading from the N-terminus, the 141-residue chain is Large ribosomal subunit protein uL16 (141 aa).

Basic residues predominate over residues 1 to 21 (MLMPKRTKFRKQMKGRNRGKS). A disordered region spans residues 1-22 (MLMPKRTKFRKQMKGRNRGKSF).

It belongs to the universal ribosomal protein uL16 family. Part of the 50S ribosomal subunit.

Its function is as follows. Binds 23S rRNA and is also seen to make contacts with the A and possibly P site tRNAs. The polypeptide is Large ribosomal subunit protein uL16 (Wolinella succinogenes (strain ATCC 29543 / DSM 1740 / CCUG 13145 / JCM 31913 / LMG 7466 / NCTC 11488 / FDC 602W) (Vibrio succinogenes)).